A 339-amino-acid chain; its full sequence is Phenylalanine--tRNA ligase alpha subunit (339 aa).

Glu-254 contacts Mg(2+).

Belongs to the class-II aminoacyl-tRNA synthetase family. Phe-tRNA synthetase alpha subunit type 1 subfamily. Tetramer of two alpha and two beta subunits. Mg(2+) serves as cofactor.

The protein localises to the cytoplasm. The enzyme catalyses tRNA(Phe) + L-phenylalanine + ATP = L-phenylalanyl-tRNA(Phe) + AMP + diphosphate + H(+). This Clostridium perfringens (strain SM101 / Type A) protein is Phenylalanine--tRNA ligase alpha subunit.